The chain runs to 167 residues: NAD(P)H-quinone oxidoreductase subunit I, chloroplastic (167 aa).

2 consecutive 4Fe-4S ferredoxin-type domains span residues 55-84 (GRIH…VDWK) and 95-124 (LNYS…MTEE). 8 residues coordinate [4Fe-4S] cluster: Cys64, Cys67, Cys70, Cys74, Cys104, Cys107, Cys110, and Cys114.

The protein belongs to the complex I 23 kDa subunit family. In terms of assembly, NDH is composed of at least 16 different subunits, 5 of which are encoded in the nucleus. The cofactor is [4Fe-4S] cluster.

The protein resides in the plastid. The protein localises to the chloroplast thylakoid membrane. The enzyme catalyses a plastoquinone + NADH + (n+1) H(+)(in) = a plastoquinol + NAD(+) + n H(+)(out). It catalyses the reaction a plastoquinone + NADPH + (n+1) H(+)(in) = a plastoquinol + NADP(+) + n H(+)(out). NDH shuttles electrons from NAD(P)H:plastoquinone, via FMN and iron-sulfur (Fe-S) centers, to quinones in the photosynthetic chain and possibly in a chloroplast respiratory chain. The immediate electron acceptor for the enzyme in this species is believed to be plastoquinone. Couples the redox reaction to proton translocation, and thus conserves the redox energy in a proton gradient. The chain is NAD(P)H-quinone oxidoreductase subunit I, chloroplastic from Citrus sinensis (Sweet orange).